The following is a 230-amino-acid chain: Ropporin-1-like protein (230 aa).

An RIIa domain is found at P17–P54.

This sequence belongs to the ropporin family. In terms of assembly, component of the axonemal radial spoke complex 1 (RS1), at least composed of spoke head proteins RSPH1, RSPH3, RSPH9 and the cilia-specific component RSPH4A or sperm-specific component RSPH6A, spoke stalk proteins RSPH14, DNAJB13, DYDC1, ROPN1L and NME5, and the anchor protein IQUB. May interact with AKAP3. Interacts with FSCB; the interaction increases upon spermatozoa capacitation conditions. Interacts with CFAP61. In terms of processing, sumoylated, sumoylation decreases upon spermatozoa capacitation conditions.

The protein localises to the cell projection. Its subcellular location is the cilium. The protein resides in the flagellum. In terms of biological role, functions as part of axonemal radial spoke complexes that play an important part in the motility of sperm and cilia. Important for male fertility. With ROPN1, involved in fibrous sheath integrity and sperm motility, plays a role in PKA-dependent signaling processes required for spermatozoa capacitation. The sequence is that of Ropporin-1-like protein (ROPN1L) from Macaca fascicularis (Crab-eating macaque).